The primary structure comprises 399 residues: Brefeldin A resistance protein (399 aa).

3 stretches are compositionally biased toward basic and acidic residues: residues 1-31, 49-69, and 101-130; these read MTSK…DETS, SKSE…KETT, and KVEE…KESA. 2 disordered regions span residues 1–173 and 191–269; these read MTSK…FGAF and KKFA…SEII. A compositionally biased stretch (low complexity) spans 138–157; sequence SPFSQFASFSNASSPFSNVS. Basic and acidic residues-rich tracts occupy residues 205–217 and 241–252; these read SGKE…KSSE and TKSEPKEADKGS. The span at 253-263 shows a compositional bias: polar residues; it reads GDSTKSTMHQL. One can recognise a RanBD1 domain in the interval 256-396; sequence TKSTMHQLSD…VLEAIPKGGR (141 aa).

In terms of processing, phosphorylated.

The protein resides in the nucleus. In Schizosaccharomyces pombe (strain 972 / ATCC 24843) (Fission yeast), this protein is Brefeldin A resistance protein (hba1).